A 456-amino-acid chain; its full sequence is Argininosuccinate lyase (456 aa).

This sequence belongs to the lyase 1 family. Argininosuccinate lyase subfamily.

Its subcellular location is the cytoplasm. The enzyme catalyses 2-(N(omega)-L-arginino)succinate = fumarate + L-arginine. It functions in the pathway amino-acid biosynthesis; L-arginine biosynthesis; L-arginine from L-ornithine and carbamoyl phosphate: step 3/3. This chain is Argininosuccinate lyase, found in Shewanella woodyi (strain ATCC 51908 / MS32).